We begin with the raw amino-acid sequence, 616 residues long: Probable Xaa-Pro aminopeptidase P (616 aa).

Residues Asp413, Asp424, Glu522, and Glu536 each contribute to the Mn(2+) site.

Belongs to the peptidase M24B family. Mn(2+) is required as a cofactor.

The catalysed reaction is Release of any N-terminal amino acid, including proline, that is linked to proline, even from a dipeptide or tripeptide.. Functionally, catalyzes the removal of a penultimate prolyl residue from the N-termini of peptides. The chain is Probable Xaa-Pro aminopeptidase P (AMPP) from Paracoccidioides brasiliensis (strain Pb03).